Consider the following 279-residue polypeptide: Tryptophan 2,3-dioxygenase (279 aa).

Substrate-binding positions include phenylalanine 48–histidine 52, tyrosine 110, and arginine 114. Histidine 237 provides a ligand contact to heme. Threonine 251 serves as a coordination point for substrate.

It belongs to the tryptophan 2,3-dioxygenase family. As to quaternary structure, homotetramer. It depends on heme as a cofactor.

The enzyme catalyses L-tryptophan + O2 = N-formyl-L-kynurenine. Its pathway is amino-acid degradation; L-tryptophan degradation via kynurenine pathway; L-kynurenine from L-tryptophan: step 1/2. Its function is as follows. Heme-dependent dioxygenase that catalyzes the oxidative cleavage of the L-tryptophan (L-Trp) pyrrole ring and converts L-tryptophan to N-formyl-L-kynurenine. Catalyzes the oxidative cleavage of the indole moiety. The chain is Tryptophan 2,3-dioxygenase from Bacillus anthracis.